Consider the following 361-residue polypeptide: Phosphoserine aminotransferase (361 aa).

Arg-43 provides a ligand contact to L-glutamate. Pyridoxal 5'-phosphate-binding positions include 77 to 78 (AS), Trp-103, Thr-153, Asp-173, and Gln-196. Lys-197 bears the N6-(pyridoxal phosphate)lysine mark. Residue 238-239 (NT) participates in pyridoxal 5'-phosphate binding.

It belongs to the class-V pyridoxal-phosphate-dependent aminotransferase family. SerC subfamily. As to quaternary structure, homodimer. Requires pyridoxal 5'-phosphate as cofactor.

The protein resides in the cytoplasm. It carries out the reaction O-phospho-L-serine + 2-oxoglutarate = 3-phosphooxypyruvate + L-glutamate. It catalyses the reaction 4-(phosphooxy)-L-threonine + 2-oxoglutarate = (R)-3-hydroxy-2-oxo-4-phosphooxybutanoate + L-glutamate. It participates in amino-acid biosynthesis; L-serine biosynthesis; L-serine from 3-phospho-D-glycerate: step 2/3. Its pathway is cofactor biosynthesis; pyridoxine 5'-phosphate biosynthesis; pyridoxine 5'-phosphate from D-erythrose 4-phosphate: step 3/5. Catalyzes the reversible conversion of 3-phosphohydroxypyruvate to phosphoserine and of 3-hydroxy-2-oxo-4-phosphonooxybutanoate to phosphohydroxythreonine. The polypeptide is Phosphoserine aminotransferase (Pseudomonas entomophila (strain L48)).